Reading from the N-terminus, the 699-residue chain is MTAKPHISCQFKRDYPQLINLYPTCTIATQHSLDNLNRLRHQCLTALLTQPSPHLCVMGQWGLGDGIELLSFIHYWQTLAKTQNLPRLLLKVFEPNPINYYELKLLWDQSQSLILHPHLQPIANAIIEAKPARIIGCQRLIFDDGRISLDLDFGDLQTMLVNQPHCGTYPIQQWLILPHLAPQLSRKILWQMARLSADDAHFIGVELAETTQNLAKTCGFSPLTITADMLCGEQIDSIASQIVTDDILLHERKLLRQQANNHQAFTPRPSQVASTKQPIAIIGGGLASAHLMLSLAEREQSSILFCKDNDLGQGASGNRQGAIYPLLTPENDELSRFFQQAFLFSRRRIAALSLASMKGSDVASGVMPISHDFCGVLQTGHDERSQQRLDKIIQSQDWPAEIAYAVDASEANKIAKIGIDKAGFYYPLGGWVCPFEYAKAAVDKASQLANVQCHFNTEITEIERDAKGWYLLSQDQRFGPFRQLVLANGAQLTQFSASERLQISPFRGQVSHIPSQFQLSQLATVLCANGYLTPSHQGLHCLGASYVKAAEHLDFCPLEQLENLGKMQQSYPNQDWVEDIDISANSARVGVRMVTRDHFPMMGCAPDVNEIWARYEQHQINQQQAEQIRHYWQTTPAPIHDGLYILGGLGSRGLSSGPLAAECLAAQLTDEPLPLDWPTLNKLSPNRMWLRKLLKGKAL.

Positions 1–260 (MTAKPHISCQ…ERKLLRQQAN (260 aa)) are tRNA (mnm(5)s(2)U34)-methyltransferase. Residues 282–699 (IGGGLASAHL…LRKLLKGKAL (418 aa)) form an FAD-dependent cmnm(5)s(2)U34 oxidoreductase region.

In the N-terminal section; belongs to the methyltransferase superfamily. tRNA (mnm(5)s(2)U34)-methyltransferase family. It in the C-terminal section; belongs to the DAO family. It depends on FAD as a cofactor.

It localises to the cytoplasm. It catalyses the reaction 5-aminomethyl-2-thiouridine(34) in tRNA + S-adenosyl-L-methionine = 5-methylaminomethyl-2-thiouridine(34) in tRNA + S-adenosyl-L-homocysteine + H(+). In terms of biological role, catalyzes the last two steps in the biosynthesis of 5-methylaminomethyl-2-thiouridine (mnm(5)s(2)U) at the wobble position (U34) in tRNA. Catalyzes the FAD-dependent demodification of cmnm(5)s(2)U34 to nm(5)s(2)U34, followed by the transfer of a methyl group from S-adenosyl-L-methionine to nm(5)s(2)U34, to form mnm(5)s(2)U34. The sequence is that of tRNA 5-methylaminomethyl-2-thiouridine biosynthesis bifunctional protein MnmC from Shewanella oneidensis (strain ATCC 700550 / JCM 31522 / CIP 106686 / LMG 19005 / NCIMB 14063 / MR-1).